Consider the following 445-residue polypeptide: Polyadenylate-binding protein RBP47A (445 aa).

Positions 1 to 12 are enriched in polar residues; the sequence is MQTPNNNGSTDS. 2 disordered regions span residues 1-45 and 93-117; these read MQTP…WQQQ and AAYQQQQQQHHQSQQQPRGGSGGDD. Pro residues predominate over residues 22–35; that stretch reads TPPPPLQQSTPPPQ. Low complexity-rich tracts occupy residues 36 to 45 and 93 to 108; these read QQQQQQWQQQ and AAYQQQQQQHHQSQQQ. RRM domains lie at 119–199, 213–292, and 327–399; these read KTLW…WASF, LSIF…IATP, and STIF…WGRS.

Belongs to the polyadenylate-binding RBP47 family. Interacts with the poly(A) tail of mRNA in nucleus. Expressed in leaves, stems, flowers, and seedlings.

It is found in the nucleus. The protein resides in the cytoplasmic granule. In terms of biological role, heterogeneous nuclear ribonucleoprotein (hnRNP)-protein binding the poly(A) tail of mRNA and probably involved in some steps of pre-mRNA maturation. This chain is Polyadenylate-binding protein RBP47A (RBP47A), found in Arabidopsis thaliana (Mouse-ear cress).